Consider the following 622-residue polypeptide: MADGPDEYDTETGCVPLLHPEEIKPQSHYNHGYGEPLGRKTHVDDYSTWDIVKATQYGIYERCRELVEAGYDVRQPDKENVTLLHWAAINNRIDLVKYYISKGAIVDQLGGDLNSTPLHWATRQGHLSMVVQLMKYGADPSLIDGEGCSCIHLAAQFGHTSIVAYLIAKGQDVDMMDQNGMTPLMWAAYRTHSVDPTRLLLTFNVSVNLGDKYHKNTALHWAVLAGNTTVISLLLEAGGNVDAQNVKGESALDLAKQRKNVWMINHLQEARQAKGYDNPSFLRKLKADKEFRQKVMLGTPFLVIWLVGFIADLNIDSWLIKGLMYGGVWATVQFLSKSFFDHSMHSALPLGIYLATKFWMYVTWFFWFWNDLSFLSIHLPFLANSVALFYNFGKSWKSDPGIIKATEEQKKKTIVELAETGSLDLSIFCSTCLIRKPVRSKHCGVCNRCIAKFDHHCPWVGNCVGAGNHRYFMGYLFFLLFMICWMIYGCVSYWGLHCETTYTKDGFWTYITQIATCSPWMFWMFLNSVFHFMWVAVLLMCQMYQITCLGITTNERMNARRYKHFKVTTTSIESPFNHGCVRNIIDFFEFRCCGLFRPVIVDWTRQYTIEYDQISGSGYQLV.

At 1–294 (MADGPDEYDT…LKADKEFRQK (294 aa)) the chain is on the cytoplasmic side. Positions 1–295 (MADGPDEYDT…KADKEFRQKV (295 aa)) are necessary and sufficient for interaction with DNAJC5 and SNAP25. ANK repeat units lie at residues 41–76 (THVD…VRQP), 79–108 (ENVT…IVDQ), 113–142 (LNST…DPSL), 146–175 (EGCS…DVDM), 179–209 (NGMT…SVNL), 214–243 (HKNT…NVDA), and 247–276 (KGES…AKGY). Helical transmembrane passes span 295–315 (VMLG…DLNI) and 316–336 (DSWL…QFLS). Over 337–347 (KSFFDHSMHSA) the chain is Lumenal. The helical transmembrane segment at 348–368 (LPLGIYLATKFWMYVTWFFWF) threads the bilayer. The Cytoplasmic segment spans residues 369–371 (WND). Residues 372-392 (LSFLSIHLPFLANSVALFYNF) traverse the membrane as a helical segment. Residues 393–470 (GKSWKSDPGI…GNCVGAGNHR (78 aa)) are Lumenal-facing. In terms of domain architecture, DHHC spans 427-477 (IFCSTCLIRKPVRSKHCGVCNRCIAKFDHHCPWVGNCVGAGNHRYFMGYLF). Cys-457 (S-palmitoyl cysteine intermediate) is an active-site residue. Residues 471–491 (YFMGYLFFLLFMICWMIYGCV) form a helical membrane-spanning segment. The Cytoplasmic segment spans residues 492–506 (SYWGLHCETTYTKDG). A helical transmembrane segment spans residues 507–526 (FWTYITQIATCSPWMFWMFL). Residues 527-529 (NSV) lie on the Lumenal side of the membrane. The helical transmembrane segment at 530-552 (FHFMWVAVLLMCQMYQITCLGIT) threads the bilayer. Residues 553 to 622 (TNERMNARRY…QISGSGYQLV (70 aa)) are Cytoplasmic-facing.

It belongs to the DHHC palmitoyltransferase family. AKR/ZDHHC17 subfamily. In terms of assembly, interacts (via ANK repeats) with numerous proteins (via the consensus sequence motif [VIAP]-[VIT]-x-x-Q-P). Interacts (via ANK repeats) with CLIP3. Interacts (via ANK repeats) with HTT. Interacts (via ANK repeats) with DNAJC5 (via C-terminus). Interacts (via ANK repeats) with MAP6. Interacts (via ANK repeats) with SNAP23. Interacts (via ANK repeats) with SNAP25. Interacts (via ANK repeats) with EVL. Interacts with SPRED1 and SPRED3. Interacts with GPM6A and OPTN. May interact (via ANK repeats) with SPRED2. May interact with NTRK1; may regulate its localization and function. Post-translationally, autopalmitoylated. Autopalmitoylation has a regulatory role in ZDHHC17-mediated Mg(2+) transport.

It is found in the golgi apparatus membrane. The protein localises to the cytoplasmic vesicle membrane. The protein resides in the presynaptic cell membrane. It catalyses the reaction L-cysteinyl-[protein] + hexadecanoyl-CoA = S-hexadecanoyl-L-cysteinyl-[protein] + CoA. The catalysed reaction is L-cysteinyl-[protein] + tetradecanoyl-CoA = S-tetradecanoyl-L-cysteinyl-[protein] + CoA. It carries out the reaction L-cysteinyl-[protein] + octadecanoyl-CoA = S-octadecanoyl-L-cysteinyl-[protein] + CoA. Its function is as follows. Palmitoyltransferase that catalyzes the addition of palmitate onto various protein substrates and is involved in a variety of cellular processes. Has no stringent fatty acid selectivity and in addition to palmitate can also transfer onto target proteins myristate from tetradecanoyl-CoA and stearate from octadecanoyl-CoA. Palmitoyltransferase specific for a subset of neuronal proteins, including SNAP25, DLG4/PSD95, GAD2, SYT1 and HTT. Also palmitoylates neuronal protein GPM6A as well as SPRED1 and SPRED3. Could also play a role in axonogenesis through the regulation of NTRK1 and the downstream ERK1/ERK2 signaling cascade. May be involved in the sorting or targeting of critical proteins involved in the initiating events of endocytosis at the plasma membrane. May play a role in Mg(2+) transport. Could also palmitoylate DNAJC5 and regulate its localization to the Golgi membrane. Palmitoylates CASP6, thereby preventing its dimerization and subsequent activation. This Rattus norvegicus (Rat) protein is Palmitoyltransferase ZDHHC17.